A 225-amino-acid chain; its full sequence is Octanoyltransferase (225 aa).

The BPL/LPL catalytic domain occupies 29 to 210; it reads PDTDDEIWVV…RLIAHLDGAT (182 aa). Substrate is bound by residues 69 to 76, 141 to 143, and 154 to 156; these read RGGQITYH, ALG, and GLS. Cysteine 172 acts as the Acyl-thioester intermediate in catalysis.

The protein belongs to the LipB family.

It is found in the cytoplasm. It carries out the reaction octanoyl-[ACP] + L-lysyl-[protein] = N(6)-octanoyl-L-lysyl-[protein] + holo-[ACP] + H(+). It participates in protein modification; protein lipoylation via endogenous pathway; protein N(6)-(lipoyl)lysine from octanoyl-[acyl-carrier-protein]: step 1/2. Catalyzes the transfer of endogenously produced octanoic acid from octanoyl-acyl-carrier-protein onto the lipoyl domains of lipoate-dependent enzymes. Lipoyl-ACP can also act as a substrate although octanoyl-ACP is likely to be the physiological substrate. The chain is Octanoyltransferase from Burkholderia pseudomallei (strain K96243).